A 729-amino-acid chain; its full sequence is Transient receptor potential cation channel subfamily V member 5 (729 aa).

The Cytoplasmic segment spans residues 1-327 (MGGFLPKAEG…SFKWNKYGRP (327 aa)). ANK repeat units follow at residues 44 to 74 (ILES…DVRQ), 78 to 107 (LGET…ELVF), 116 to 145 (AGQT…SVSA), 162 to 191 (FGEH…DIRA), 195 to 228 (LGNT…HGDH), and 239 to 268 (QGLT…HIQW). Residues 328-348 (YFCILAALYLLYMICFTTCCV) traverse the membrane as a helical segment. The Extracellular segment spans residues 349-385 (YRPLKFRGGNRTHSRDITILQQKLLQEAYETREDIIR). Asparagine 358 carries N-linked (GlcNAc...) asparagine glycosylation. The helical transmembrane segment at 386 to 408 (LVGELVSIVGAVIILLLEIPDIF) threads the bilayer. The Cytoplasmic portion of the chain corresponds to 409–419 (RVGASRYFGKT). Residues 420 to 442 (ILGGPFHVIIITYASLVLVTMVM) form a helical membrane-spanning segment. Over 443 to 448 (RLTNTN) the chain is Extracellular. Residues 449–469 (GEVVPMSFALVLGWCSVMYFT) form a helical membrane-spanning segment. At 470–492 (RGFQMLGPFTIMIQKMIFGDLMR) the chain is on the cytoplasmic side. The chain crosses the membrane as a helical span at residues 493–513 (FCWLMAVVILGFASAFYIIFQ). Positions 524-544 (YDYPMALFTTFELFLTVIDAP) form an intramembrane region, pore-forming. Aspartate 542 contributes to the Ca(2+) binding site. A helical transmembrane segment spans residues 557–577 (IVNFAFTIIATLLMLNLFIAM). Residues 578-729 (MGDTHWRVAQ…EGDGEEVYHF (152 aa)) lie on the Cytoplasmic side of the membrane. The segment at 598–602 (VATTV) is interaction with S100A10. Residues 650 to 653 (VFKN) form an involved in Ca(2+)-dependent inactivation region. The segment covering 654-665 (SDKEDDQEHPSE) has biased composition (basic and acidic residues). The disordered stretch occupies residues 654–675 (SDKEDDQEHPSEKQPSGAESGT). Threonine 685 carries the phosphothreonine modification. Phosphoserine is present on serine 689. Positions 700 to 729 (GWEILRQNTLGHLNLGLNLSEGDGEEVYHF) are involved in Ca(2+)-dependent inactivation.

The protein belongs to the transient receptor (TC 1.A.4) family. TrpV subfamily. TRPV5 sub-subfamily. Homotetramer and probably heterotetramer with TRPV6. Interacts with TRPV6. Interacts with S100A10 and probably with the ANAX2-S100A10 heterotetramer. The interaction with S100A10 is required for the trafficking to the plasma membrane. Interacts with calmodulin. Interacts with BSPRY, which results in its inactivation. Post-translationally, glycosylated. As to expression, expressed at high levels in kidney, small intestine and pancreas, and at lower levels in testis, prostate, placenta, brain, colon and rectum.

Its subcellular location is the apical cell membrane. It catalyses the reaction Ca(2+)(in) = Ca(2+)(out). With respect to regulation, activated by WNK3. Its function is as follows. Constitutively active calcium selective cation channel thought to be involved in Ca(2+) reabsorption in kidney and intestine. Required for normal Ca(2+) reabsorption in the kidney distal convoluted tubules. The channel is activated by low internal calcium level and the current exhibits an inward rectification. A Ca(2+)-dependent feedback regulation includes fast channel inactivation and slow current decay. Heteromeric assembly with TRPV6 seems to modify channel properties. TRPV5-TRPV6 heteromultimeric concatemers exhibit voltage-dependent gating. The polypeptide is Transient receptor potential cation channel subfamily V member 5 (TRPV5) (Homo sapiens (Human)).